The sequence spans 1054 residues: Trehalose synthase complex regulatory subunit TPS3 (1054 aa).

Residues 112-133 (AANSGIPPANNPVSSGSTAQRP) form a disordered region. The span at 122-132 (NPVSSGSTAQR) shows a compositional bias: polar residues. 3 positions are modified to phosphoserine: serine 148, serine 150, and serine 181. 2 disordered regions span residues 155–203 (ASSI…PVSK) and 223–250 (QQQA…SSSN). The span at 170 to 182 (LSSSLMKNPNLSF) shows a compositional bias: polar residues. Residues 235–249 (SGSTAGDSSIASSSS) show a composition bias toward low complexity. Threonine 265 carries the phosphothreonine modification. Residues serine 267 and serine 273 each carry the phosphoserine modification. Residues 287 to 778 (KFGGYSNNAK…SNQETSTVFN (492 aa)) are glycosyltransferase. Phosphoserine is present on serine 960.

This sequence in the N-terminal section; belongs to the glycosyltransferase 20 family. In terms of assembly, the trehalose synthase complex is composed of the two catalytic subunits TPS1 and TPS2 and at least one of the two regulatory subunits TPS3 or TSL1.

It localises to the cytoplasm. In terms of biological role, regulatory subunit of the trehalose synthase complex that catalyzes the production of trehalose from glucose-6-phosphate and UDP-glucose in a two step process. May stabilize the trehalose synthase complex. The chain is Trehalose synthase complex regulatory subunit TPS3 (TPS3) from Saccharomyces cerevisiae (strain ATCC 204508 / S288c) (Baker's yeast).